The following is a 1125-amino-acid chain: Tudor domain-containing protein 7 (1125 aa).

The region spanning 3–76 is the HTH OST-type 1 domain; it reads EADLVSKMLR…SGEITCYAMA (74 aa). Positions 126 to 157 are disordered; that stretch reads PGFSSDFSVSKKPNPTLLRDKGNSLGVKSDAE. Residues 127-138 are compositionally biased toward polar residues; the sequence is GFSSDFSVSKKP. In terms of domain architecture, HTH OST-type 2 spans 260–329; it reads KMDEVQNRIK…GQDLLLYPAK (70 aa). A Phosphoserine modification is found at S346. The 70-residue stretch at 364-433 folds into the HTH OST-type 3 domain; that stretch reads MPGDFKEKVA…PQKAILYAKL (70 aa). 2 consecutive Tudor domains span residues 540 to 597 and 730 to 787; these read TVHV…FCSL and LPFC…FLQE. Residues 881–895 are compositionally biased toward low complexity; the sequence is SSGTSSPNSKSGSTP. A disordered region spans residues 881 to 904; that stretch reads SSGTSSPNSKSGSTPVPGSTGDNF. S886 is modified (phosphoserine). Positions 888 to 1125 are interaction with CDK17; sequence NSKSGSTPVP…EYLVELSKVN (238 aa). The interaction with CABLES1 stretch occupies residues 920 to 1125; sequence TSSLSVEELP…EYLVELSKVN (206 aa).

It belongs to the TDRD7 family. Found in a mRNP complex, at least composed of TDRD1, TDRD6, TDRD7 and DDX4. Found in a complex containing CABLES1, CDK16 and CDK17. Interacts with CABLES1, CDK17 and PIWIL1.

The protein localises to the cytoplasm. Component of specific cytoplasmic RNA granules involved in post-transcriptional regulation of specific genes: probably acts by binding to specific mRNAs and regulating their translation. Required for lens transparency during lens development, by regulating translation of genes such as CRYBB3 and HSPB1 in the developing lens. Also required during spermatogenesis. This Canis lupus familiaris (Dog) protein is Tudor domain-containing protein 7 (TDRD7).